Here is a 191-residue protein sequence, read N- to C-terminus: Glutathione S-transferase Y-2 (191 aa).

Residues 2–80 enclose the GST N-terminal domain; sequence TFATVYIKPH…YIVAKGSKPE (79 aa). Residues 85–191 enclose the GST C-terminal domain; it reads TTEERATNTR…VSQHPIIKNM (107 aa).

Belongs to the GST superfamily.

It carries out the reaction RX + glutathione = an S-substituted glutathione + a halide anion + H(+). Conjugation of reduced glutathione to a wide number of exogenous and endogenous hydrophobic electrophiles. This is Glutathione S-transferase Y-2 (GSTY2) from Pichia kudriavzevii (Yeast).